The primary structure comprises 399 residues: Tyrosine--tRNA ligase (399 aa).

A 'HIGH' region motif is present at residues 42–51; that stretch reads PTAPDLHLGH. The 'KMSKS' region motif lies at 226-230; that stretch reads KMSKS. Position 229 (Lys-229) interacts with ATP. The region spanning 336–396 is the S4 RNA-binding domain; the sequence is MPIAAVLNKA…GKKAFARITL (61 aa).

It belongs to the class-I aminoacyl-tRNA synthetase family. TyrS type 2 subfamily. As to quaternary structure, homodimer.

It is found in the cytoplasm. It carries out the reaction tRNA(Tyr) + L-tyrosine + ATP = L-tyrosyl-tRNA(Tyr) + AMP + diphosphate + H(+). Catalyzes the attachment of tyrosine to tRNA(Tyr) in a two-step reaction: tyrosine is first activated by ATP to form Tyr-AMP and then transferred to the acceptor end of tRNA(Tyr). This is Tyrosine--tRNA ligase from Pseudomonas fluorescens (strain Pf0-1).